A 122-amino-acid chain; its full sequence is Large ribosomal subunit protein bL12 (122 aa).

The protein belongs to the bacterial ribosomal protein bL12 family. In terms of assembly, homodimer. Part of the ribosomal stalk of the 50S ribosomal subunit. Forms a multimeric L10(L12)X complex, where L10 forms an elongated spine to which 2 to 4 L12 dimers bind in a sequential fashion. Binds GTP-bound translation factors.

Functionally, forms part of the ribosomal stalk which helps the ribosome interact with GTP-bound translation factors. Is thus essential for accurate translation. This Histophilus somni (strain 129Pt) (Haemophilus somnus) protein is Large ribosomal subunit protein bL12.